The chain runs to 577 residues: Phosphatidylinositol/phosphatidylcholine transfer protein SFH14 (577 aa).

The disordered stretch occupies residues 1–22; sequence MSGREQTGEKLSDSEYIEEEPR. Residues 136-311 form the CRAL-TRIO domain; sequence ELDEVTRHYP…FLGGLCKCPN (176 aa). The tract at residues 364–383 is disordered; sequence ETLKEEPEPEEYYSSTGSRS. Residues 523–550 are a coiled coil; sequence EANEKLLAESLERIKSLELDLDKTKSVL.

This sequence belongs to the SFH family.

It is found in the golgi apparatus membrane. Its subcellular location is the cell membrane. In terms of biological role, required for transport of secretory proteins from the Golgi complex. Catalyzes the transfer of phosphatidylinositol and phosphatidylcholine between membranes in vitro. The sequence is that of Phosphatidylinositol/phosphatidylcholine transfer protein SFH14 (SFH14) from Arabidopsis thaliana (Mouse-ear cress).